The sequence spans 278 residues: HTH-type transcriptional activator RhaS (278 aa).

Residues 174–272 (NLLLAWLEDH…NWSPRDIRQG (99 aa)) form the HTH araC/xylS-type domain. 2 consecutive DNA-binding regions (H-T-H motif) follow at residues 191–212 (DAVADQFSLSLRTLHRQLKQQT) and 239–262 (VTDIAYRCGFSDSNHFSTLFHREF).

As to quaternary structure, binds DNA as a dimer.

It localises to the cytoplasm. In terms of biological role, activates expression of the rhaBAD and rhaT operons. The sequence is that of HTH-type transcriptional activator RhaS from Shigella boydii serotype 18 (strain CDC 3083-94 / BS512).